A 347-amino-acid chain; its full sequence is UDP-3-O-acylglucosamine N-acyltransferase (347 aa).

The Proton acceptor role is filled by histidine 241.

The protein belongs to the transferase hexapeptide repeat family. LpxD subfamily. Homotrimer.

The catalysed reaction is a UDP-3-O-[(3R)-3-hydroxyacyl]-alpha-D-glucosamine + a (3R)-hydroxyacyl-[ACP] = a UDP-2-N,3-O-bis[(3R)-3-hydroxyacyl]-alpha-D-glucosamine + holo-[ACP] + H(+). Its pathway is bacterial outer membrane biogenesis; LPS lipid A biosynthesis. In terms of biological role, catalyzes the N-acylation of UDP-3-O-acylglucosamine using 3-hydroxyacyl-ACP as the acyl donor. Is involved in the biosynthesis of lipid A, a phosphorylated glycolipid that anchors the lipopolysaccharide to the outer membrane of the cell. In Neisseria meningitidis serogroup A / serotype 4A (strain DSM 15465 / Z2491), this protein is UDP-3-O-acylglucosamine N-acyltransferase.